A 1157-amino-acid chain; its full sequence is Folliculin-interacting protein 1 (1157 aa).

The uDENN FNIP1/2-type domain occupies 37–467; sequence FDPSQIRLIV…TVMPNGQPPI (431 aa). 4 disordered regions span residues 92–120, 616–665, 769–796, and 904–955; these read PGGD…CPKY, SQQE…TKVE, SPPT…NRDC, and VPHG…NYYG. Residues 95 to 111 are compositionally biased toward low complexity; that stretch reads DSSSSLDSSINSSSSFS. One can recognise a cDENN FNIP1/2-type domain in the interval 475 to 1083; the sequence is SSQSVDMLAK…VSNLLHSTLQ (609 aa). The span at 651–664 shows a compositional bias: basic and acidic residues; it reads ADGHQPRTCQDTKV. Positions 904–916 are enriched in basic and acidic residues; it reads VPHGDRENAEKKV. Residues 1093 to 1148 enclose the dDENN FNIP1/2-type domain; sequence FCVMHLEDRLQELYFKSKMLSEYLKGQMRVHVKELGVVLGIESSDLPLLAAVASTH.

This sequence belongs to the FNIP family. In terms of assembly, homodimer and homomultimer. Heterodimer and heteromultimer with FNIP2. Component of the lysosomal folliculin complex (LFC).

The protein resides in the lysosome membrane. The protein localises to the cytoplasm. Its subcellular location is the cytosol. Functionally, binding partner of the GTPase-activating protein FLCN: involved in the cellular response to amino acid availability by regulating the non-canonical mTORC1 signaling cascade controlling the MiT/TFE factors TFEB and TFE3. Required to promote FLCN recruitment to lysosomes and interaction with Rag GTPases, leading to activation of the non-canonical mTORC1 signaling. In low-amino acid conditions, component of the lysosomal folliculin complex (LFC) on the membrane of lysosomes, which inhibits the GTPase-activating activity of FLCN, thereby inactivating mTORC1 and promoting nuclear translocation of TFEB and TFE3. Upon amino acid restimulation, disassembly of the LFC complex liberates the GTPase-activating activity of FLCN, leading to activation of mTORC1 and subsequent inactivation of TFEB and TFE3. In addition to its role in mTORC1 signaling, also acts as a co-chaperone of HSP90AA1/Hsp90: inhibits the ATPase activity of HSP90AA1/Hsp90, leading to activate both kinase and non-kinase client proteins of HSP90AA1/Hsp90. Acts as a scaffold to load client protein FLCN onto HSP90AA1/Hsp90. This is Folliculin-interacting protein 1 from Gallus gallus (Chicken).